Consider the following 939-residue polypeptide: cGMP-dependent 3',5'-cyclic phosphodiesterase (939 aa).

Gly2 carries N-myristoyl glycine lipidation. 2 S-palmitoyl cysteine lipidation sites follow: Cys5 and Cys11. The tract at residues 16–38 (YPAARPAEPRGQQVFLKPDEPPP) is disordered. Ser116 bears the Phosphoserine mark. The tract at residues 197–217 (PEAVQNTSVDASEDQKDEKGY) is disordered. GAF domains lie at 236 to 373 (ATSL…HYTG) and 408 to 547 (DVSV…GISI). 3',5'-cyclic GMP is bound by residues Ser430, Asp445, Ile464, Tyr487, and Thr498. Positions 577 to 901 (SDDEYTKLLH…EHWTKVSHKF (325 aa)) constitute a PDEase domain. The active-site Proton donor is the His655. Positions 659, 695, 696, and 807 each coordinate Zn(2+). Asp696 serves as a coordination point for Mg(2+).

This sequence belongs to the cyclic nucleotide phosphodiesterase family. PDE2 subfamily. As to quaternary structure, homodimer. Requires Zn(2+) as cofactor. It depends on Mg(2+) as a cofactor. As to expression, expressed in brain and liver (at protein level).

Its subcellular location is the cytoplasm. It is found in the mitochondrion matrix. The protein localises to the mitochondrion inner membrane. The protein resides in the mitochondrion outer membrane. It localises to the cell membrane. It carries out the reaction a nucleoside 3',5'-cyclic phosphate + H2O = a nucleoside 5'-phosphate + H(+). The catalysed reaction is 3',5'-cyclic GMP + H2O = GMP + H(+). It catalyses the reaction 3',5'-cyclic AMP + H2O = AMP + H(+). Its activity is regulated as follows. The 3',5'-cyclic-AMP phosphodiesterase activity is stimulated by 3',5'-cyclic GMP. Specifically inhibited by Bay 60-7550. In terms of biological role, cGMP-activated cyclic nucleotide phosphodiesterase with a dual-specificity for the second messengers cAMP and cGMP, which are key regulators of many important physiological processes. Has a higher efficiency with cGMP compared to cAMP. Plays a role in cell growth and migration. Regulates mitochondrial cAMP levels and respiration. Involved in the regulation of mitochondria morphology/dynamics and apoptotic cell death via local modulation of cAMP/PKA signaling in the mitochondrion, including the monitoring of local cAMP levels at the outer mitochondrial membrane and of PKA-dependent phosphorylation of DNM1L. The polypeptide is cGMP-dependent 3',5'-cyclic phosphodiesterase (Mus musculus (Mouse)).